Here is a 78-residue protein sequence, read N- to C-terminus: UPF0291 protein MCCL_0996 (78 aa).

The protein belongs to the UPF0291 family.

It is found in the cytoplasm. This Macrococcus caseolyticus (strain JCSC5402) (Macrococcoides caseolyticum) protein is UPF0291 protein MCCL_0996.